Reading from the N-terminus, the 301-residue chain is Syntaxin-17 (301 aa).

Position 2 is an N-acetylserine (S2). Topologically, residues 2–227 are cytoplasmic; that stretch reads SEDEEKVKLR…KNLQKAAKYK (226 aa). The residue at position 41 (K41) is an N6-acetyllysine. The stretch at 49–128 forms a coiled coil; that stretch reads DKLHEEHINA…QVNDEELLQP (80 aa). A Phosphotyrosine; by ABL1 modification is found at Y156. The region spanning 161-223 is the t-SNARE coiled-coil homology domain; it reads IPQDQNAAES…EEGTKNLQKA (63 aa). The chain crosses the membrane as a helical span at residues 228–248; it reads LAALPVAGALIGGVVGGPIGL. Residues 228–274 are necessary and sufficient for localization to autophagosome; the sequence is LAALPVAGALIGGVVGGPIGLLAGFKVAGIAAALGGGVLGFTGGKLI. Over 249–253 the chain is Lumenal; it reads LAGFK. A helical transmembrane segment spans residues 254–274; the sequence is VAGIAAALGGGVLGFTGGKLI. Topologically, residues 275 to 301 are cytoplasmic; the sequence is QRRKQKMMEKLTSSCPDLPSQSDKKRS. S288 is modified (phosphoserine). The Endoplasmic reticulum retention signal signature appears at 298-301; it reads KKRS.

Belongs to the syntaxin family. Forms a SNARE complex composed of VAMP8, SNAP29 and STX17 involved in fusion of autophagosome with lysosome. May interact with VTI1B. Probably interacts with BET1, SCFD1 and SEC22B. Interacts with PTPN2 and ABL1; involved in STX17 phosphorylation. Interacts with COPB1. Interacts with TMED9 and TMED10; the interaction is direct. Interacts with VAMP7. Interacts with RUBCNL/PACER; promoting targeting of RUBCNL/PACER to autophagosome. Interacts with VAMP8, SNAP29, VPS39 and VPS41; these interactions are increased in the absence of TMEM39A. Interacts with IRGM; promoting STX17 recruitment to autophagosomes. Interacts with ATG8 proteins GABARAP and MAP1LC3B. Interacts with RNF115; this interaction enhances STX17 stability which in turn promotes autophagosome maturation. Interacts with RAB39A (GTP-bound); the interaction promotes autophagosome-lysosome membrane fusion driven by STX17-SNAP29-VAMP8. Interacts with RAB39B; the interaction may promote a different fonction in autophagy as compared with RAB39A. In terms of processing, dephosphorylation by PTPN2; regulates exit from the endoplasmic reticulum. Phosphorylated at Tyr-156 probably by ABL1.

It localises to the endoplasmic reticulum membrane. It is found in the smooth endoplasmic reticulum membrane. The protein resides in the endoplasmic reticulum-Golgi intermediate compartment membrane. Its subcellular location is the cytoplasmic vesicle. The protein localises to the autophagosome membrane. It localises to the COPII-coated vesicle membrane. It is found in the cytoplasm. The protein resides in the cytosol. Its subcellular location is the mitochondrion membrane. The protein localises to the autolysosome membrane. Functionally, SNAREs, soluble N-ethylmaleimide-sensitive factor-attachment protein receptors, are essential proteins for fusion of cellular membranes. SNAREs localized on opposing membranes assemble to form a trans-SNARE complex, an extended, parallel four alpha-helical bundle that drives membrane fusion. STX17 is a SNARE of the autophagosome involved in autophagy through the direct control of autophagosome membrane fusion with the lysosome membrane. May also play a role in the early secretory pathway where it may maintain the architecture of the endoplasmic reticulum-Golgi intermediate compartment/ERGIC and Golgi and/or regulate transport between the endoplasmic reticulum, the ERGIC and the Golgi. The chain is Syntaxin-17 from Mus musculus (Mouse).